The following is a 765-amino-acid chain: 5-methyltetrahydropteroyltriglutamate--homocysteine methyltransferase (765 aa).

5-methyltetrahydropteroyltri-L-glutamate contacts are provided by residues 18–21 (REWK) and K114. L-homocysteine contacts are provided by residues 437 to 439 (IGS) and E490. L-methionine is bound by residues 437-439 (IGS) and E490. Residue W567 coordinates 5-methyltetrahydropteroyltri-L-glutamate. Residue D605 participates in L-homocysteine binding. L-methionine is bound at residue D605. E611 is a 5-methyltetrahydropteroyltri-L-glutamate binding site. Zn(2+)-binding residues include H647, C649, and E671. H700 functions as the Proton donor in the catalytic mechanism. A Zn(2+)-binding site is contributed by C732.

Belongs to the vitamin-B12 independent methionine synthase family. Requires Zn(2+) as cofactor.

It catalyses the reaction 5-methyltetrahydropteroyltri-L-glutamate + L-homocysteine = tetrahydropteroyltri-L-glutamate + L-methionine. It functions in the pathway amino-acid biosynthesis; L-methionine biosynthesis via de novo pathway; L-methionine from L-homocysteine (MetE route): step 1/1. Catalyzes the transfer of a methyl group from 5-methyltetrahydrofolate to homocysteine resulting in methionine formation. This chain is 5-methyltetrahydropteroyltriglutamate--homocysteine methyltransferase, found in Listeria monocytogenes serotype 4b (strain F2365).